A 253-amino-acid chain; its full sequence is Ribosomal RNA small subunit methyltransferase I (253 aa).

The segment covering arginine 230–proline 246 has biased composition (basic and acidic residues). Residues arginine 230–lysine 253 are disordered.

Belongs to the methyltransferase superfamily. RsmI family.

It is found in the cytoplasm. The enzyme catalyses cytidine(1402) in 16S rRNA + S-adenosyl-L-methionine = 2'-O-methylcytidine(1402) in 16S rRNA + S-adenosyl-L-homocysteine + H(+). Functionally, catalyzes the 2'-O-methylation of the ribose of cytidine 1402 (C1402) in 16S rRNA. This is Ribosomal RNA small subunit methyltransferase I from Leptospira borgpetersenii serovar Hardjo-bovis (strain L550).